The sequence spans 448 residues: Methylenetetrahydrofolate--tRNA-(uracil-5-)-methyltransferase TrmFO (448 aa).

13-18 lines the FAD pocket; that stretch reads GAGLAG.

Belongs to the MnmG family. TrmFO subfamily. FAD is required as a cofactor.

It is found in the cytoplasm. The enzyme catalyses uridine(54) in tRNA + (6R)-5,10-methylene-5,6,7,8-tetrahydrofolate + NADH + H(+) = 5-methyluridine(54) in tRNA + (6S)-5,6,7,8-tetrahydrofolate + NAD(+). The catalysed reaction is uridine(54) in tRNA + (6R)-5,10-methylene-5,6,7,8-tetrahydrofolate + NADPH + H(+) = 5-methyluridine(54) in tRNA + (6S)-5,6,7,8-tetrahydrofolate + NADP(+). Its function is as follows. Catalyzes the folate-dependent formation of 5-methyl-uridine at position 54 (M-5-U54) in all tRNAs. This is Methylenetetrahydrofolate--tRNA-(uracil-5-)-methyltransferase TrmFO from Streptococcus pyogenes serotype M18 (strain MGAS8232).